The primary structure comprises 454 residues: Guanine deaminase (454 aa).

Residues H82 and H84 each coordinate Zn(2+). Residues 84–87 (HAPQ), 213–214 (RF), 240–243 (HISE), and D330 contribute to the substrate site. Zn(2+)-binding residues include H240 and D330. The residue at position 453 (S453) is a Phosphoserine.

Belongs to the metallo-dependent hydrolases superfamily. ATZ/TRZ family. Homodimer. Requires Zn(2+) as cofactor.

It carries out the reaction guanine + H2O + H(+) = xanthine + NH4(+). It functions in the pathway purine metabolism; guanine degradation; xanthine from guanine: step 1/1. Catalyzes the hydrolytic deamination of guanine, producing xanthine and ammonia. This Rattus norvegicus (Rat) protein is Guanine deaminase (Gda).